A 190-amino-acid chain; its full sequence is Holliday junction branch migration complex subunit RuvA (190 aa).

The segment at 1–65 (MIGNLSGIVD…ENVAQLYGFI (65 aa)) is domain I. A domain II region spans residues 66–143 (SKEEQQCLRL…KLEINNNNFH (78 aa)). The tract at residues 144-147 (PINE) is flexible linker. The segment at 147 to 190 (EDALSALINLGYEKMKAYDTIKKYRPNLDTKDIIRMALKELSIL) is domain III.

It belongs to the RuvA family. As to quaternary structure, homotetramer. Forms an RuvA(8)-RuvB(12)-Holliday junction (HJ) complex. HJ DNA is sandwiched between 2 RuvA tetramers; dsDNA enters through RuvA and exits via RuvB. An RuvB hexamer assembles on each DNA strand where it exits the tetramer. Each RuvB hexamer is contacted by two RuvA subunits (via domain III) on 2 adjacent RuvB subunits; this complex drives branch migration. In the full resolvosome a probable DNA-RuvA(4)-RuvB(12)-RuvC(2) complex forms which resolves the HJ.

The protein localises to the cytoplasm. Functionally, the RuvA-RuvB-RuvC complex processes Holliday junction (HJ) DNA during genetic recombination and DNA repair, while the RuvA-RuvB complex plays an important role in the rescue of blocked DNA replication forks via replication fork reversal (RFR). RuvA specifically binds to HJ cruciform DNA, conferring on it an open structure. The RuvB hexamer acts as an ATP-dependent pump, pulling dsDNA into and through the RuvAB complex. HJ branch migration allows RuvC to scan DNA until it finds its consensus sequence, where it cleaves and resolves the cruciform DNA. This is Holliday junction branch migration complex subunit RuvA from Wolbachia pipientis wMel.